The chain runs to 754 residues: Photosystem I P700 chlorophyll a apoprotein A1 (754 aa).

8 helical membrane passes run 72-95, 158-181, 197-221, 293-311, 351-374, 390-416, 438-460, and 535-553; these read IFSAHFGHLAVIFVWLSGMYFHGA, LYCTAIGGLVMAGLMLFAGWFHYH, MNHHLAGLLGLGSLGWAGHQIHVSL, TAHHHLAIAVLFIIAGHMY, WHAQLAINLALLGSLSIIVAHHMY, LSLFTHHVWIGGFLIVGAGAHGAIFMV, AIISHLNWVCIFLGFHSFGLYIH, and FMVHHIHAFTIHVTVLILL. [4Fe-4S] cluster contacts are provided by Cys577 and Cys586. The next 2 membrane-spanning stretches (helical) occupy residues 593–614 and 668–690; these read HVFLGLFWMYNSLSIVIFHFSW and LSAYGIMFLAGHFVFAFSLMFLF. His679 serves as a coordination point for chlorophyll a'. The chlorophyll a site is built by Met687 and Tyr695. Residue Trp696 participates in phylloquinone binding. A helical membrane pass occupies residues 728 to 748; that stretch reads AVGVAHYLLGGIVTTWAFFLA.

This sequence belongs to the PsaA/PsaB family. As to quaternary structure, the PsaA/B heterodimer binds the P700 chlorophyll special pair and subsequent electron acceptors. PSI consists of a core antenna complex that captures photons, and an electron transfer chain that converts photonic excitation into a charge separation. The cyanobacterial PSI reaction center is composed of one copy each of PsaA,B,C,D,E,F,I,J,K,L,M and X, and forms trimeric complexes. The cofactor is PSI electron transfer chain: 5 chlorophyll a, 1 chlorophyll a', 2 phylloquinones and 3 4Fe-4S clusters. PSI core antenna: 90 chlorophyll a, 22 carotenoids, 3 phospholipids and 1 galactolipid. P700 is a chlorophyll a/chlorophyll a' dimer, A0 is one or more chlorophyll a, A1 is one or both phylloquinones and FX is a shared 4Fe-4S iron-sulfur center..

The protein resides in the cellular thylakoid membrane. It carries out the reaction reduced [plastocyanin] + hnu + oxidized [2Fe-2S]-[ferredoxin] = oxidized [plastocyanin] + reduced [2Fe-2S]-[ferredoxin]. Functionally, psaA and PsaB bind P700, the primary electron donor of photosystem I (PSI), as well as the electron acceptors A0, A1 and FX. PSI is a plastocyanin/cytochrome c6-ferredoxin oxidoreductase, converting photonic excitation into a charge separation, which transfers an electron from the donor P700 chlorophyll pair to the spectroscopically characterized acceptors A0, A1, FX, FA and FB in turn. Oxidized P700 is reduced on the lumenal side of the thylakoid membrane by plastocyanin or cytochrome c6. The polypeptide is Photosystem I P700 chlorophyll a apoprotein A1 (Rippkaea orientalis (strain PCC 8801 / RF-1) (Cyanothece sp. (strain PCC 8801))).